Reading from the N-terminus, the 237-residue chain is Ribonuclease PH (237 aa).

Phosphate-binding positions include R86 and G124 to R126.

This sequence belongs to the RNase PH family. Homohexameric ring arranged as a trimer of dimers.

It catalyses the reaction tRNA(n+1) + phosphate = tRNA(n) + a ribonucleoside 5'-diphosphate. Functionally, phosphorolytic 3'-5' exoribonuclease that plays an important role in tRNA 3'-end maturation. Removes nucleotide residues following the 3'-CCA terminus of tRNAs; can also add nucleotides to the ends of RNA molecules by using nucleoside diphosphates as substrates, but this may not be physiologically important. Probably plays a role in initiation of 16S rRNA degradation (leading to ribosome degradation) during starvation. The protein is Ribonuclease PH of Bradyrhizobium sp. (strain BTAi1 / ATCC BAA-1182).